The sequence spans 376 residues: MRLSVRKVLLAVGCALALVLAVQLGQQVLECRAVLGGVRSPRRMQPEQEELVMLGADHVEYRYGKTMPLIFVGGVPRSGTTLMRAMLDAHPEVRCGEETRIIPRVLAMRQAWTKSGREKLRLDEAGVTDEVLDAAMQAFILEVIAKHGEPARVLCNKDPFTLKSSVYLARLFPNSKFLLMVRDGRASVHSMITRKVTIAGFDLSSYRDCLTKWNKAIEVMYAQCMEVGRDKCLPVYYEQLVLHPRRSLKRILDFLGIAWSDTVLHHEDLIGKPGGVSLSKIERSTDQVIKPVNLEALSKWTGHIPRDVVRDMAQIAPMLARLGYDPYANPPNYGNPDPIVINNTHRVLKGDYKTPANLKGYFQVNQNSTSPHLGSS.

Residues 1–8 (MRLSVRKV) are Cytoplasmic-facing. Residues 9–25 (LLAVGCALALVLAVQLG) form a helical; Signal-anchor for type II membrane protein membrane-spanning segment. The Lumenal segment spans residues 26 to 376 (QQVLECRAVL…NSTSPHLGSS (351 aa)). 77–81 (RSGTT) contributes to the 3'-phosphoadenylyl sulfate binding site. Cysteine 95 and cysteine 155 are joined by a disulfide. Residue glutamate 98 is the Proton donor/acceptor of the active site. The tract at residues 100-104 (RIIPR) is interaction with peptide substrate. The 3'-phosphoadenylyl sulfate site is built by arginine 182, serine 190, and arginine 194. Cysteine 224 and cysteine 232 form a disulfide bridge. Residues tyrosine 237, 284-293 (STDQVIKPVN), and lysine 299 each bind 3'-phosphoadenylyl sulfate. N-linked (GlcNAc...) asparagine glycans are attached at residues asparagine 342 and asparagine 367.

Belongs to the protein sulfotransferase family. As to quaternary structure, homodimer. Can also form heterodimers with TPST1. In terms of processing, N-glycosylated.

It localises to the golgi apparatus membrane. It catalyses the reaction L-tyrosyl-[protein] + 3'-phosphoadenylyl sulfate = O-sulfo-L-tyrosine-[protein] + adenosine 3',5'-bisphosphate + H(+). Its function is as follows. Catalyzes the O-sulfation of tyrosine residues within acidic motifs of polypeptides, using 3'-phosphoadenylyl sulfate (PAPS) as cosubstrate. The sequence is that of Protein-tyrosine sulfotransferase 2 (Tpst2) from Rattus norvegicus (Rat).